The following is a 279-amino-acid chain: uncharacterized protein (279 aa).

The tract at residues 233–279 is disordered; the sequence is NDHQLHDSPLCSDVSDSTSNNNYDESLNFSNDNNNSSFNDFDDDNFI. A compositionally biased stretch (polar residues) spans 246–259; sequence VSDSTSNNNYDESL. Low complexity predominate over residues 260 to 271; sequence NFSNDNNNSSFN.

This is an uncharacterized protein from Buchnera aphidicola subsp. Baizongia pistaciae (strain Bp).